A 952-amino-acid polypeptide reads, in one-letter code: UvrABC system protein A (952 aa).

ATP is bound at residue 31–38 (GVSGSGKS). The C4-type zinc-finger motif lies at 253–280 (CPEHGSVLEELEPRIFSFNSPYGACPAC). ABC transporter domains follow at residues 309–591 (WSRG…PQSL) and 611–938 (GNGK…AFLA). An ATP-binding site is contributed by 643 to 650 (GPSGSGKS). Residues 742–768 (CEACGGDGTVKIEMLFLPDLYVPCEVC) form a C4-type zinc finger.

It belongs to the ABC transporter superfamily. UvrA family. In terms of assembly, forms a heterotetramer with UvrB during the search for lesions.

It is found in the cytoplasm. The UvrABC repair system catalyzes the recognition and processing of DNA lesions. UvrA is an ATPase and a DNA-binding protein. A damage recognition complex composed of 2 UvrA and 2 UvrB subunits scans DNA for abnormalities. When the presence of a lesion has been verified by UvrB, the UvrA molecules dissociate. The chain is UvrABC system protein A from Thermus thermophilus (strain ATCC 27634 / DSM 579 / HB8).